The primary structure comprises 323 residues: Sphingolipid delta(4)-desaturase DES1 (323 aa).

Gly-2 is lipidated: N-myristoyl glycine. A run of 2 helical transmembrane segments spans residues 41–61 and 68–88; these read HNLI…FYLV and WVIF…TLAI. Residues 89–93 carry the Histidine box-1 motif; that stretch reads HEISH. Residues 104 to 124 traverse the membrane as a helical segment; sequence WNRWFGMFANLSLGVPYSISF. Positions 128–132 match the Histidine box-2 motif; that stretch reads HMDHH. 3 consecutive transmembrane segments (helical) span residues 152 to 172, 184 to 204, and 209 to 229; these read FFCT…FYAF, YLEI…YYVF, and LVYM…SGHF. The Histidine box-3 signature appears at 259–263; it reads HNEHH. The residue at position 307 (Ser-307) is a Phosphoserine.

The protein belongs to the fatty acid desaturase type 1 family. DEGS subfamily. In terms of assembly, interacts with RLBP1; the interaction increases synthesis of chromophore-precursors by DEGS1. Post-translationally, myristoylation can target the enzyme to the mitochondria leading to an increase in ceramide levels. Detected in testis. Detected in pachytene spermatocytes and round spermatids. Expressed in retina and retinal pigment epithelium by Mueller cells (at protein level).

The protein resides in the mitochondrion membrane. It is found in the endoplasmic reticulum membrane. The catalysed reaction is an N-acylsphinganine + 2 Fe(II)-[cytochrome b5] + O2 + 2 H(+) = an N-acylsphing-4-enine + 2 Fe(III)-[cytochrome b5] + 2 H2O. It catalyses the reaction all-trans-retinol = 11-cis-retinol. It carries out the reaction all-trans-retinol = 9-cis-retinol. The enzyme catalyses all-trans-retinol = 13-cis-retinol. The catalysed reaction is 11-cis-retinol = 13-cis-retinol. It catalyses the reaction 11-cis-retinol = 9-cis-retinol. Has sphingolipid-delta-4-desaturase activity. Converts D-erythro-sphinganine to D-erythro-sphingosine (E-sphing-4-enine). Catalyzes the equilibrium isomerization of retinols. The protein is Sphingolipid delta(4)-desaturase DES1 of Mus musculus (Mouse).